Consider the following 456-residue polypeptide: Hydroxyproline dehydrogenase (456 aa).

Residues lysine 310 and lysine 320 each carry the N6-acetyllysine modification.

The protein belongs to the proline oxidase family. FAD is required as a cofactor.

The enzyme catalyses trans-4-hydroxy-L-proline + a quinone = (3R,5S)-1-pyrroline-3-hydroxy-5-carboxylate + a quinol + H(+). The catalysed reaction is L-proline + a quinone = (S)-1-pyrroline-5-carboxylate + a quinol + H(+). Functionally, dehydrogenase that converts trans-4-L-hydroxyproline to delta-1-pyrroline-3-hydroxy-5-carboxylate (Hyp) using ubiquinone-10 as the terminal electron acceptor. Can also use proline as a substrate but with a very much lower efficiency. Does not react with other diastereomers of Hyp: trans-4-D-hydroxyproline and cis-4-L-hydroxyproline. Ubiquininone analogs such as menadione, duroquinone and ubiquinone-1 react more efficiently than oxygen as the terminal electron acceptor during catalysis. The protein is Hydroxyproline dehydrogenase of Mus musculus (Mouse).